Reading from the N-terminus, the 416-residue chain is Gamma-glutamyl phosphate reductase (416 aa).

This sequence belongs to the gamma-glutamyl phosphate reductase family.

It localises to the cytoplasm. The catalysed reaction is L-glutamate 5-semialdehyde + phosphate + NADP(+) = L-glutamyl 5-phosphate + NADPH + H(+). Its pathway is amino-acid biosynthesis; L-proline biosynthesis; L-glutamate 5-semialdehyde from L-glutamate: step 2/2. Catalyzes the NADPH-dependent reduction of L-glutamate 5-phosphate into L-glutamate 5-semialdehyde and phosphate. The product spontaneously undergoes cyclization to form 1-pyrroline-5-carboxylate. The sequence is that of Gamma-glutamyl phosphate reductase from Streptococcus mutans serotype c (strain ATCC 700610 / UA159).